Reading from the N-terminus, the 97-residue chain is YcgL domain-containing protein PFLU_1517 (97 aa).

Residues 3–87 form the YcgL domain; that stretch reads RICSIYRSKK…AEDEYIEHLP (85 aa).

This chain is YcgL domain-containing protein PFLU_1517, found in Pseudomonas fluorescens (strain SBW25).